The chain runs to 194 residues: dCTP deaminase, dUMP-forming (194 aa).

DCTP contacts are provided by residues 104–109 (RSSLGR), Asp-122, 130–132 (TLE), Gln-151, Tyr-165, Lys-172, and Gln-176. Glu-132 serves as the catalytic Proton donor/acceptor.

Belongs to the dCTP deaminase family. Homotrimer.

It catalyses the reaction dCTP + 2 H2O = dUMP + NH4(+) + diphosphate. The protein operates within pyrimidine metabolism; dUMP biosynthesis; dUMP from dCTP: step 1/1. Its function is as follows. Bifunctional enzyme that catalyzes both the deamination of dCTP to dUTP and the hydrolysis of dUTP to dUMP without releasing the toxic dUTP intermediate. This Dictyoglomus turgidum (strain DSM 6724 / Z-1310) protein is dCTP deaminase, dUMP-forming.